The sequence spans 187 residues: Ribosome-recycling factor (187 aa).

This sequence belongs to the RRF family.

The protein resides in the cytoplasm. Responsible for the release of ribosomes from messenger RNA at the termination of protein biosynthesis. May increase the efficiency of translation by recycling ribosomes from one round of translation to another. This chain is Ribosome-recycling factor, found in Rhodopseudomonas palustris (strain BisB5).